The sequence spans 505 residues: Probable alpha-L-arabinofuranosidase C (505 aa).

Residues Asn152, Asn269, and Asn438 are each glycosylated (N-linked (GlcNAc...) asparagine).

Belongs to the glycosyl hydrolase 51 family.

It localises to the secreted. It catalyses the reaction Hydrolysis of terminal non-reducing alpha-L-arabinofuranoside residues in alpha-L-arabinosides.. It participates in glycan metabolism; L-arabinan degradation. Functionally, alpha-L-arabinofuranosidase involved in the degradation of arabinoxylan, a major component of plant hemicellulose. Acts only on small linear 1,5-alpha-linked L-arabinofuranosyl oligosaccharides. In Aspergillus clavatus (strain ATCC 1007 / CBS 513.65 / DSM 816 / NCTC 3887 / NRRL 1 / QM 1276 / 107), this protein is Probable alpha-L-arabinofuranosidase C (abfC).